The chain runs to 213 residues: Orotate phosphoribosyltransferase (213 aa).

Lys-25 provides a ligand contact to 5-phospho-alpha-D-ribose 1-diphosphate. 33–34 lines the orotate pocket; that stretch reads FF. Residues 71-72, Arg-98, Lys-99, Lys-102, His-104, and 124-132 contribute to the 5-phospho-alpha-D-ribose 1-diphosphate site; these read YK and DDVITSGTA. Positions 128 and 156 each coordinate orotate.

It belongs to the purine/pyrimidine phosphoribosyltransferase family. PyrE subfamily. Homodimer. The cofactor is Mg(2+).

It carries out the reaction orotidine 5'-phosphate + diphosphate = orotate + 5-phospho-alpha-D-ribose 1-diphosphate. It functions in the pathway pyrimidine metabolism; UMP biosynthesis via de novo pathway; UMP from orotate: step 1/2. Functionally, catalyzes the transfer of a ribosyl phosphate group from 5-phosphoribose 1-diphosphate to orotate, leading to the formation of orotidine monophosphate (OMP). This Buchnera aphidicola subsp. Acyrthosiphon pisum (strain 5A) protein is Orotate phosphoribosyltransferase.